Consider the following 464-residue polypeptide: Argininosuccinate lyase (464 aa).

Belongs to the lyase 1 family. Argininosuccinate lyase subfamily.

The protein localises to the cytoplasm. It carries out the reaction 2-(N(omega)-L-arginino)succinate = fumarate + L-arginine. It functions in the pathway amino-acid biosynthesis; L-arginine biosynthesis; L-arginine from L-ornithine and carbamoyl phosphate: step 3/3. The chain is Argininosuccinate lyase from Pseudomonas savastanoi pv. phaseolicola (strain 1448A / Race 6) (Pseudomonas syringae pv. phaseolicola (strain 1448A / Race 6)).